We begin with the raw amino-acid sequence, 150 residues long: Endoribonuclease YbeY (150 aa).

Positions 112, 116, and 122 each coordinate Zn(2+).

Belongs to the endoribonuclease YbeY family. Requires Zn(2+) as cofactor.

The protein localises to the cytoplasm. In terms of biological role, single strand-specific metallo-endoribonuclease involved in late-stage 70S ribosome quality control and in maturation of the 3' terminus of the 16S rRNA. The protein is Endoribonuclease YbeY of Protochlamydia amoebophila (strain UWE25).